Here is a 186-residue protein sequence, read N- to C-terminus: Interferon lambda-3 (186 aa).

An N-terminal signal peptide occupies residues 1–21; sequence MVCYGVTIILVGTLGSLLVGA. 3 disulfides stabilise this stretch: Cys31-Cys128, Cys65-Cys160, and Cys178-Cys185.

It belongs to the lambda interferon family.

Its subcellular location is the secreted. In terms of biological role, cytokine which plays a critical role in the antiviral host defense, predominantly in the epithelial tissues. Acts as a ligand for the heterodimeric class II cytokine receptor composed of IL10RB and IFNLR1, and receptor engagement leads to the activation of the JAK/STAT signaling pathway resulting in the expression of IFN-stimulated genes (ISG), which mediate the antiviral state. Has a restricted receptor distribution and therefore restricted targets: is primarily active in epithelial cells and this cell type-selective action is because of the epithelial cell-specific expression of its receptor IFNLR1. Exhibits antiviral activity against the H5N1 influenza A virus. Induces the expression of the antiviral MX protein in epithelial-rich tissues, such as intestine, trachea and lung. The polypeptide is Interferon lambda-3 (IFNL3) (Gallus gallus (Chicken)).